A 235-amino-acid polypeptide reads, in one-letter code: Uridylate kinase (235 aa).

ATP is bound at residue 9 to 12 (KLSG). The interval 17–22 (GKDGYG) is involved in allosteric activation by GTP. Position 51 (Gly51) interacts with UMP. Positions 52 and 56 each coordinate ATP. UMP-binding positions include Asp71 and 132-139 (TGNPYFTT). ATP contacts are provided by Thr159, Tyr165, and Asp168.

Belongs to the UMP kinase family. As to quaternary structure, homohexamer.

The protein resides in the cytoplasm. The enzyme catalyses UMP + ATP = UDP + ADP. It participates in pyrimidine metabolism; CTP biosynthesis via de novo pathway; UDP from UMP (UMPK route): step 1/1. With respect to regulation, allosterically activated by GTP. Inhibited by UTP. Functionally, catalyzes the reversible phosphorylation of UMP to UDP. The sequence is that of Uridylate kinase from Chlorobium luteolum (strain DSM 273 / BCRC 81028 / 2530) (Pelodictyon luteolum).